Consider the following 318-residue polypeptide: Ankyrin repeat domain-containing protein 1 (318 aa).

A coiled-coil region spans residues 37-77 (ALEKQEDLKTTSKSLIELEEEKQSKEKQLKSELLKKKLEER). ANK repeat units follow at residues 151 to 180 (YKRT…NIEF), 184 to 213 (LEST…AINA), 217 to 246 (LLST…DLNA), 250 to 279 (EGDT…NLNI), and 283 to 314 (AGKT…KNSH).

It is found in the nucleus. In terms of biological role, may act as a nuclear transcription factor that negatively regulates the expression of cardiac genes. The sequence is that of Ankyrin repeat domain-containing protein 1 (ankrd1) from Xenopus laevis (African clawed frog).